The sequence spans 399 residues: 1-deoxy-D-xylulose 5-phosphate reductoisomerase (399 aa).

Residues Thr-11, Gly-12, Ser-13, Ile-14, and Asn-125 each contribute to the NADPH site. Lys-126 contacts 1-deoxy-D-xylulose 5-phosphate. Position 127 (Glu-127) interacts with NADPH. A Mn(2+)-binding site is contributed by Asp-151. Residues Ser-152, Glu-153, Ser-186, and His-209 each coordinate 1-deoxy-D-xylulose 5-phosphate. Mn(2+) is bound at residue Glu-153. Gly-215 provides a ligand contact to NADPH. Ser-222, Asn-227, Lys-228, and Glu-231 together coordinate 1-deoxy-D-xylulose 5-phosphate. Glu-231 is a Mn(2+) binding site.

This sequence belongs to the DXR family. Mg(2+) serves as cofactor. Mn(2+) is required as a cofactor.

It carries out the reaction 2-C-methyl-D-erythritol 4-phosphate + NADP(+) = 1-deoxy-D-xylulose 5-phosphate + NADPH + H(+). Its pathway is isoprenoid biosynthesis; isopentenyl diphosphate biosynthesis via DXP pathway; isopentenyl diphosphate from 1-deoxy-D-xylulose 5-phosphate: step 1/6. In terms of biological role, catalyzes the NADPH-dependent rearrangement and reduction of 1-deoxy-D-xylulose-5-phosphate (DXP) to 2-C-methyl-D-erythritol 4-phosphate (MEP). This Acinetobacter baumannii (strain SDF) protein is 1-deoxy-D-xylulose 5-phosphate reductoisomerase.